A 304-amino-acid chain; its full sequence is Nod factor export ATP-binding protein I (304 aa).

Positions 6 to 236 (IDFRNVEKRF…EIGCDVIEIY (231 aa)) constitute an ABC transporter domain. 38 to 45 (GPNGAGKT) provides a ligand contact to ATP.

This sequence belongs to the ABC transporter superfamily. Lipooligosaccharide exporter (TC 3.A.1.102) family. As to quaternary structure, the complex is composed of two ATP-binding proteins (NodI) and two transmembrane proteins (NodJ).

It is found in the cell inner membrane. Functionally, part of the ABC transporter complex NodIJ involved in the export of the nodulation factors (Nod factors), the bacterial signal molecules that induce symbiosis and subsequent nodulation induction. Nod factors are LCO (lipo-chitin oligosaccharide), a modified beta-1,4-linked N-acetylglucosamine oligosaccharide. This subunit is responsible for energy coupling to the transport system. This is Nod factor export ATP-binding protein I from Burkholderia lata (strain ATCC 17760 / DSM 23089 / LMG 22485 / NCIMB 9086 / R18194 / 383).